Here is a 200-residue protein sequence, read N- to C-terminus: TATA-box-binding protein (200 aa).

Repeat copies occupy residues 25-101 (LQNI…ARII) and 115-192 (IQNI…YPVL).

The protein belongs to the TBP family. As to quaternary structure, belongs to the TFIID complex together with the TBP-associated factors (TAFs). Binds DNA as monomer.

It localises to the nucleus. In terms of biological role, general transcription factor that functions at the core of the DNA-binding multiprotein factor TFIID. Binding of TFIID to the TATA box is the initial transcriptional step of the pre-initiation complex (PIC), playing a role in the activation of eukaryotic genes transcribed by RNA polymerase II. This is TATA-box-binding protein (TBP) from Solanum tuberosum (Potato).